A 294-amino-acid chain; its full sequence is Bifunctional protein FolD (294 aa).

Residues 166-168 (GRS), Ser191, and Ile232 each bind NADP(+).

It belongs to the tetrahydrofolate dehydrogenase/cyclohydrolase family. Homodimer.

The enzyme catalyses (6R)-5,10-methylene-5,6,7,8-tetrahydrofolate + NADP(+) = (6R)-5,10-methenyltetrahydrofolate + NADPH. It carries out the reaction (6R)-5,10-methenyltetrahydrofolate + H2O = (6R)-10-formyltetrahydrofolate + H(+). The protein operates within one-carbon metabolism; tetrahydrofolate interconversion. In terms of biological role, catalyzes the oxidation of 5,10-methylenetetrahydrofolate to 5,10-methenyltetrahydrofolate and then the hydrolysis of 5,10-methenyltetrahydrofolate to 10-formyltetrahydrofolate. This is Bifunctional protein FolD from Bradyrhizobium sp. (strain BTAi1 / ATCC BAA-1182).